We begin with the raw amino-acid sequence, 369 residues long: MNDLEQLERQILEDIAAAVDEQGIEAVRVAALGKKGTVSEKLKTLGGMSPEERQMQGPAINGLKNRVTEALSERRTELRKAAVAARLEREKVDVTLPVRESAASRGRIHPISQVIDEITAIFADMGFSIAEGPDIETDYYNFTALNFPEGHPAREMHDTFFFNPDEKSERKLLRTHTSPVQVHTMEKFAAMRDKEGRDELIRIVIPGKTYRMDSDATHSPMFHQVEGLVVDKSANVANMKWVLEEFCKAFFEVPSVKMRMRPSFFPFTEPSVEVDIQCDRSGPHVKFGEGNDWLEILGCGMVHPNVLRMSGYDPEVYQGFAWGMGIDRIAMLKYGMPDLRAFFDADVRWIEHYGFRPLDIPTLFGGLSA.

E269 is a binding site for Mg(2+).

Belongs to the class-II aminoacyl-tRNA synthetase family. Phe-tRNA synthetase alpha subunit type 1 subfamily. As to quaternary structure, tetramer of two alpha and two beta subunits. The cofactor is Mg(2+).

Its subcellular location is the cytoplasm. The enzyme catalyses tRNA(Phe) + L-phenylalanine + ATP = L-phenylalanyl-tRNA(Phe) + AMP + diphosphate + H(+). The polypeptide is Phenylalanine--tRNA ligase alpha subunit (Brucella canis (strain ATCC 23365 / NCTC 10854 / RM-666)).